The following is a 423-amino-acid chain: G-protein coupled receptor 83 (423 aa).

A signal peptide spans 1 to 17 (MKVPPVLLLFLLSSVRA). Over 18 to 71 (TEQPQVVTEHPSMEAALTGPNASSHFWANYTFSDWQNFVGRRRYGAESQNPTVK) the chain is Extracellular. N-linked (GlcNAc...) asparagine glycosylation is found at asparagine 38 and asparagine 46. Residues 72–92 (ALLIVAYSFTIVFSLFGNVLV) traverse the membrane as a helical segment. Residues 93-107 (CHVIFKNQRMHSATS) are Cytoplasmic-facing. Residues 108-129 (LFIVNLAVADIMITLLNTPFTL) traverse the membrane as a helical segment. At 130-145 (VRFVNSTWVFGKGMCH) the chain is on the extracellular side. Asparagine 134 carries an N-linked (GlcNAc...) asparagine glycan. A disulfide bridge links cysteine 144 with cysteine 224. A helical membrane pass occupies residues 146-167 (VSRFAQYCSLHVSALTLTAIAV). At 168 to 186 (DRHQVIMHPLKPRISITKG) the chain is on the cytoplasmic side. The helical transmembrane segment at 187 to 208 (VIYIAVIWVMATFFSLPHAICQ) threads the bilayer. At 209 to 238 (KLFTFKYSEDIVRSLCLPDFPEPADLFWKY) the chain is on the extracellular side. Residues 239-260 (LDLATFILLYLLPLFIISVAYA) traverse the membrane as a helical segment. The Cytoplasmic portion of the chain corresponds to 261–293 (RVAKKLWLCNTIGDVTTEQYLALRRKKKTTVKM). A helical transmembrane segment spans residues 294 to 315 (LVLVVVLFALCWFPLNCYVLLL). Residues 316-327 (SSKAIHTNNALY) lie on the Extracellular side of the membrane. Residues 328-348 (FAFHWFAMSSTCYNPFIYCWL) form a helical membrane-spanning segment. The Cytoplasmic portion of the chain corresponds to 349-423 (NENFRVELKA…SSVEPVVAMS (75 aa)). The interval 389-423 (SHGRRAPLPNHHLPSSQIQSGKTDLSSVEPVVAMS) is disordered. A compositionally biased stretch (polar residues) spans 401–414 (LPSSQIQSGKTDLS).

Belongs to the G-protein coupled receptor 1 family. As to expression, predominantly expressed in the brain, with moderate expression in the hypothalamus. Expressed in the thymus.

It localises to the cell membrane. Functionally, G-protein coupled receptor for PEN, a neuropeptide produced from the precursor protein, proSAAS (encoded by PCSK1N). Acts through a G(i)- and G(q)-alpha-alpha-mediated pathway in response to PEN. Plays a role in food intake and body weight regulation. May contribute to the regulation of anxiety-related behaviors. The chain is G-protein coupled receptor 83 from Mus musculus (Mouse).